The following is a 318-amino-acid chain: NADH-ubiquinone oxidoreductase chain 1 (318 aa).

The next 8 membrane-spanning stretches (helical) occupy residues 2-22 (FLIN…FLTL), 69-89 (FLFT…WAPL), 102-122 (LLFI…SGWA), 146-166 (MTTI…TAFA), 171-191 (HLWL…STLA), 222-242 (LFFM…VILF), 253-273 (EIST…FLWV), and 294-314 (LPLT…LACI).

The protein belongs to the complex I subunit 1 family. Core subunit of respiratory chain NADH dehydrogenase (Complex I) which is composed of 45 different subunits.

The protein localises to the mitochondrion inner membrane. It catalyses the reaction a ubiquinone + NADH + 5 H(+)(in) = a ubiquinol + NAD(+) + 4 H(+)(out). Its function is as follows. Core subunit of the mitochondrial membrane respiratory chain NADH dehydrogenase (Complex I) which catalyzes electron transfer from NADH through the respiratory chain, using ubiquinone as an electron acceptor. Essential for the catalytic activity and assembly of complex I. The sequence is that of NADH-ubiquinone oxidoreductase chain 1 (MT-ND1) from Elephas maximus (Indian elephant).